The following is a 184-amino-acid chain: Leucine-rich repeat-containing protein 20 (184 aa).

5 LRR repeats span residues 51–72 (QIHL…FMTT), 75–96 (QLRE…VSAL), 98–120 (HLKA…TALP), 121–141 (ALET…EKLA), and 145–167 (ALRS…APPL). S175 is modified (phosphoserine).

The sequence is that of Leucine-rich repeat-containing protein 20 (LRRC20) from Homo sapiens (Human).